The chain runs to 856 residues: FO synthase (856 aa).

Radical SAM core domains lie at Ile84–Asn336 and Val544–Gln785. The segment at Ser85–Leu417 is cofG-like. Positions 98, 102, 105, 558, 562, and 565 each coordinate [4Fe-4S] cluster. Positions Asp521 to Leu854 are cofH-like.

In the N-terminal section; belongs to the radical SAM superfamily. CofG family. It in the C-terminal section; belongs to the radical SAM superfamily. CofH family. Requires [4Fe-4S] cluster as cofactor.

The catalysed reaction is 5-amino-6-(D-ribitylamino)uracil + L-tyrosine + S-adenosyl-L-methionine = 5-amino-5-(4-hydroxybenzyl)-6-(D-ribitylimino)-5,6-dihydrouracil + 2-iminoacetate + 5'-deoxyadenosine + L-methionine + H(+). It catalyses the reaction 5-amino-5-(4-hydroxybenzyl)-6-(D-ribitylimino)-5,6-dihydrouracil + S-adenosyl-L-methionine = 7,8-didemethyl-8-hydroxy-5-deazariboflavin + 5'-deoxyadenosine + L-methionine + NH4(+) + H(+). The protein operates within cofactor biosynthesis; coenzyme F0 biosynthesis. Its function is as follows. Catalyzes the radical-mediated synthesis of 7,8-didemethyl-8-hydroxy-5-deazariboflavin (FO) from 5-amino-6-(D-ribitylamino)uracil and L-tyrosine. The protein is FO synthase (fbiC) of Mycobacterium bovis (strain ATCC BAA-935 / AF2122/97).